A 444-amino-acid chain; its full sequence is Baeyer-Villiger oxidase ptaJ (444 aa).

Belongs to the questin oxidase family. Requires NADPH as cofactor.

It functions in the pathway secondary metabolite biosynthesis. Baeyer-Villiger oxidase; part of the gene cluster that mediates the biosynthesis of pestheic acid, a diphenyl ether which is a biosynthetic precursor of the unique chloropupukeananes. The biosynthesis initiates from condensation of acetate and malonate units catalyzed by the non-reducing PKS ptaA. As the ptaA protein is TE/CLC domain-deficient, hydrolysis and Claisen cyclization of the polyketide could be catalyzed by ptaB containing a beta-lactamase domain. The ptaB protein might hydrolyze the thioester bond between the ACP of ptaA and the intermediate to release atrochrysone carboxylic acid, which is spontaneously dehydrated to form endocrocin anthrone. Endocrocin anthrone is then converted to endocrocin, catalyzed by the anthrone oxygenase ptaC. Spontaneous decarboxylation of endocrocin occurs to generate emodin. An O-methyltransferase (ptaH or ptaI) could methylate emodin to form physcion. PtaJ could then catalyze the oxidative cleavage of physcion, and rotation of the intermediate could then afford desmethylisosulochrin. PtaF, a putative NADH-dependent oxidoreductase, might also participate in the oxidative cleavage step. Desmethylisosulochrin is then transformed by another O-methyltransferase (ptaH or ptaI) to form isosulochrin. Chlorination of isosulochrin by ptaM in the cyclohexadienone B ring then produces chloroisosulochrin. PtaE is responsible for the oxidative coupling reactions of both benzophenones isosulouchrin and chloroisosulouchrin to RES-1214-1 and pestheic acid respectively, regardless of chlorination. The polypeptide is Baeyer-Villiger oxidase ptaJ (Pestalotiopsis fici (strain W106-1 / CGMCC3.15140)).